The chain runs to 442 residues: Histidinol dehydrogenase (442 aa).

NAD(+) is bound by residues Tyr132, Gln194, and Asn217. The substrate site is built by Ser243, Gln265, and His268. Residues Gln265 and His268 each contribute to the Zn(2+) site. Residues Glu332 and His333 each act as proton acceptor in the active site. Substrate is bound by residues His333, Asp366, Glu420, and His425. Residue Asp366 participates in Zn(2+) binding. Residue His425 participates in Zn(2+) binding.

Belongs to the histidinol dehydrogenase family. It depends on Zn(2+) as a cofactor.

The enzyme catalyses L-histidinol + 2 NAD(+) + H2O = L-histidine + 2 NADH + 3 H(+). The protein operates within amino-acid biosynthesis; L-histidine biosynthesis; L-histidine from 5-phospho-alpha-D-ribose 1-diphosphate: step 9/9. Functionally, catalyzes the sequential NAD-dependent oxidations of L-histidinol to L-histidinaldehyde and then to L-histidine. The protein is Histidinol dehydrogenase of Idiomarina loihiensis (strain ATCC BAA-735 / DSM 15497 / L2-TR).